The primary structure comprises 115 residues: Immunoglobulin kappa variable 5-2 (115 aa).

The first 20 residues, M1–A20, serve as a signal peptide directing secretion. The framework-1 stretch occupies residues E21 to C43. The Ig-like domain occupies T22–P115. An N-linked (GlcNAc...) asparagine glycan is attached at N40. Phosphoserine is present on S42. A disulfide bridge connects residues C43 and C108. The complementarity-determining-1 stretch occupies residues K44 to N54. The interval W55 to Q69 is framework-2. The tract at residues E70–P76 is complementarity-determining-2. The interval G77–C108 is framework-3. Residues L109–P115 form a complementarity-determining-3 region.

Immunoglobulins are composed of two identical heavy chains and two identical light chains; disulfide-linked.

Its subcellular location is the secreted. It localises to the cell membrane. In terms of biological role, v region of the variable domain of immunoglobulin light chains that participates in the antigen recognition. Immunoglobulins, also known as antibodies, are membrane-bound or secreted glycoproteins produced by B lymphocytes. In the recognition phase of humoral immunity, the membrane-bound immunoglobulins serve as receptors which, upon binding of a specific antigen, trigger the clonal expansion and differentiation of B lymphocytes into immunoglobulins-secreting plasma cells. Secreted immunoglobulins mediate the effector phase of humoral immunity, which results in the elimination of bound antigens. The antigen binding site is formed by the variable domain of one heavy chain, together with that of its associated light chain. Thus, each immunoglobulin has two antigen binding sites with remarkable affinity for a particular antigen. The variable domains are assembled by a process called V-(D)-J rearrangement and can then be subjected to somatic hypermutations which, after exposure to antigen and selection, allow affinity maturation for a particular antigen. In Homo sapiens (Human), this protein is Immunoglobulin kappa variable 5-2.